A 32-amino-acid polypeptide reads, in one-letter code: Parigidin-br1 (32 aa).

The cyclopeptide (Gly-Asp) cross-link spans 1-32; sequence GGSVPCGESCVFIPCITSLAGCSCKNKVCYYD. Disulfide bonds link Cys-6/Cys-22, Cys-10/Cys-24, and Cys-15/Cys-29.

Post-translationally, this is a cyclic peptide. As to expression, expressed in leaves, flowers, peduncles and seeds (at protein level).

Its function is as follows. Probably participates in a plant defense mechanism. Reduces growth of and increases mortality in larvae of D.saccharalis. Kills cultured SF-9 cells of S.frugiperda probably by disrupting plasma membranes. Has hemolytic activity against human erythrocytes. Has no antibacterial activity against E.coli strain ATCC 8739 and S.aureus strain ATCC 25923. This chain is Parigidin-br1, found in Palicourea rigida.